We begin with the raw amino-acid sequence, 72 residues long: Translation initiation factor IF-1 (72 aa).

In terms of domain architecture, S1-like spans 1 to 72; the sequence is MAKEEPIEVE…TRGRIIYRTK (72 aa).

The protein belongs to the IF-1 family. As to quaternary structure, component of the 30S ribosomal translation pre-initiation complex which assembles on the 30S ribosome in the order IF-2 and IF-3, IF-1 and N-formylmethionyl-tRNA(fMet); mRNA recruitment can occur at any time during PIC assembly.

The protein localises to the cytoplasm. Functionally, one of the essential components for the initiation of protein synthesis. Stabilizes the binding of IF-2 and IF-3 on the 30S subunit to which N-formylmethionyl-tRNA(fMet) subsequently binds. Helps modulate mRNA selection, yielding the 30S pre-initiation complex (PIC). Upon addition of the 50S ribosomal subunit IF-1, IF-2 and IF-3 are released leaving the mature 70S translation initiation complex. The protein is Translation initiation factor IF-1 of Syntrophus aciditrophicus (strain SB).